The chain runs to 275 residues: Nitrogenase iron protein 3 (275 aa).

Residue 9–16 (GKGGIGKS) coordinates ATP. [4Fe-4S] cluster is bound at residue Cys-97. Arg-100 is subject to ADP-ribosylarginine; by dinitrogenase reductase ADP-ribosyltransferase. Cys-132 lines the [4Fe-4S] cluster pocket.

Belongs to the NifH/BchL/ChlL family. In terms of assembly, homodimer. Requires [4Fe-4S] cluster as cofactor. In terms of processing, the reversible ADP-ribosylation of Arg-100 inactivates the nitrogenase reductase and regulates nitrogenase activity.

The catalysed reaction is N2 + 8 reduced [2Fe-2S]-[ferredoxin] + 16 ATP + 16 H2O = H2 + 8 oxidized [2Fe-2S]-[ferredoxin] + 2 NH4(+) + 16 ADP + 16 phosphate + 6 H(+). The key enzymatic reactions in nitrogen fixation are catalyzed by the nitrogenase complex, which has 2 components: the iron protein and the molybdenum-iron protein. In Clostridium pasteurianum, this protein is Nitrogenase iron protein 3 (nifH3).